We begin with the raw amino-acid sequence, 429 residues long: Histidine--tRNA ligase (429 aa).

The protein belongs to the class-II aminoacyl-tRNA synthetase family. As to quaternary structure, homodimer.

It localises to the cytoplasm. The enzyme catalyses tRNA(His) + L-histidine + ATP = L-histidyl-tRNA(His) + AMP + diphosphate + H(+). The protein is Histidine--tRNA ligase of Rippkaea orientalis (strain PCC 8801 / RF-1) (Cyanothece sp. (strain PCC 8801)).